Reading from the N-terminus, the 309-residue chain is General transcription factor IIH subunit 3 (309 aa).

The C4-type zinc finger occupies 269–286 (CSVCLSIFCNFSPICTTC).

It belongs to the TFB4 family. In terms of assembly, part of a TFIID-containing RNA polymerase II pre-initiation complex that is composed of TBP and at least GTF2A1, GTF2A2, GTF2E1, GTF2E2, GTF2F1, GTF2H2, GTF2H3, GTF2H4, GTF2H5, GTF2B, TCEA1, ERCC2, ERCC3, TAF1, TAF2, TAF3, TAF4, TAF5, TAF6, TAF7, TAF8, TAF9, TAF10, TAF11, TAF12 and TAF13. Component of the 7-subunit TFIIH core complex composed of XPB/ERCC3, XPD/ERCC2, GTF2H1, GTF2H2, GTF2H3, GTF2H4 and GTF2H5, which is active in NER. The core complex associates with the 3-subunit CDK-activating kinase (CAK) module composed of CCNH/cyclin H, CDK7 and MNAT1 to form the 10-subunit holoenzyme (holo-TFIIH) active in transcription. Interacts with RARA; the interaction requires prior phosphorylation of RARA on 'Ser-369' which then enhances interaction of RARA with CDK7.

The protein resides in the nucleus. Functionally, component of the general transcription and DNA repair factor IIH (TFIIH) core complex, which is involved in general and transcription-coupled nucleotide excision repair (NER) of damaged DNA and, when complexed to CAK, in RNA transcription by RNA polymerase II. In NER, TFIIH acts by opening DNA around the lesion to allow the excision of the damaged oligonucleotide and its replacement by a new DNA fragment. In transcription, TFIIH has an essential role in transcription initiation. When the pre-initiation complex (PIC) has been established, TFIIH is required for promoter opening and promoter escape. Phosphorylation of the C-terminal tail (CTD) of the largest subunit of RNA polymerase II by the kinase module CAK controls the initiation of transcription. In Rattus norvegicus (Rat), this protein is General transcription factor IIH subunit 3 (Gtf2h3).